The primary structure comprises 208 residues: Thymidylate kinase (208 aa).

10 to 17 (GGEGVGKS) lines the ATP pocket.

It belongs to the thymidylate kinase family.

It carries out the reaction dTMP + ATP = dTDP + ADP. Functionally, phosphorylation of dTMP to form dTDP in both de novo and salvage pathways of dTTP synthesis. The chain is Thymidylate kinase from Rhizorhabdus wittichii (strain DSM 6014 / CCUG 31198 / JCM 15750 / NBRC 105917 / EY 4224 / RW1) (Sphingomonas wittichii).